The following is a 516-amino-acid chain: MVIVGGGTAGWMTAAYLKTAFGDRLSITVVESSRIGTIGVGEATFSDIQHFFQFLNLREQDWMPACNATYKLGIRFENWRHVGHHFYQPFEQIRPVYGFPLTDWWLHDAPTDRFDTDCFVMPNLCEAGRSPRHLDGTLADEDFVEEGDELANRTMSEHQGKSQFPYAYHFEAALLAKFLTGYAVDRGVEHVVDDVLDVRLDQRGWIEHVVTAEHGEIHGDLFVDCTGFRGLLLNKALGVPFVSYQDTLPNDSAVALQVPLDMQRRGIVPNTTATAREAGWIWTIPLFGRVGTGYVYAKDYLSPEEAERTLREFVGPAAADVEANHIRMRIGRSQESWRNNCVAIGLSSGFVEPLESTGIFFIHHAIEQLVKHFPAADWNPKSRDMYNSAVAHVMDGIREFLVIHYRGAARADNQYWRDTKTRPLPDGLAERIECWQTQLPDTETIYPYYHGLPPYSYMCILMGGGAIRTPASAALALTDQGAAQKEFAAVRDRAAQLRDTLPSHYEYLARMRGLDV.

The FAD site is built by Gly-6, Thr-8, Ala-9, Glu-42, and Ala-43. Residue Lys-71 is part of the active site. Position 195 (Val-195) interacts with FAD. Residues Thr-357 and Gly-358 each coordinate chloride. Residue Ile-359 coordinates FAD.

Belongs to the flavin-dependent halogenase family. Bacterial tryptophan halogenase subfamily.

The catalysed reaction is 7-chloro-L-tryptophan + FADH2 + chloride + O2 = 6,7-dichloro-L-tryptophan + FAD + 2 H2O. Involved in the biosynthesis of kutznerides, actinomycete-derived antifungal and antimicrobial cyclic hexadepsipeptides. Together with KtzQ, catalyzes the regiospecific dichlorination of L-tryptophan (L-Trp) to produce 6,7-dichloro-L-tryptophan. KtzR catalyzes the chlorination of 7-chloro-L-tryptophan at C6 position to yield 6,7-dichloro-L-tryptophan. Can also use L-Trp as substrate and form 6-chloro-L-tryptophan, but has a 120-fold preference for 7-chloro-L-tryptophan over L-Trp. Cannot use piperazic acid or gamma,delta-dehydropiperazic acid. This chain is 7-chloro-L-tryptophan 6-halogenase KtzR, found in Kutzneria sp. (strain 744).